The chain runs to 256 residues: Protein FixA (256 aa).

This sequence belongs to the ETF beta-subunit/FixA family. As to quaternary structure, heterodimer of FixA and FixB.

The protein operates within amine and polyamine metabolism; carnitine metabolism. In terms of biological role, required for anaerobic carnitine reduction. May bring reductant to CaiA. The chain is Protein FixA from Escherichia coli O6:H1 (strain CFT073 / ATCC 700928 / UPEC).